The following is a 445-amino-acid chain: Tubulin alpha-3 chain (445 aa).

GTP-binding residues include Gln-11, Glu-72, Ser-141, Gly-145, Thr-146, Thr-180, Asn-207, and Asn-229. Glu-72 provides a ligand contact to Mg(2+). The active site involves Glu-255.

This sequence belongs to the tubulin family. In terms of assembly, dimer of alpha and beta chains. A typical microtubule is a hollow water-filled tube with an outer diameter of 25 nm and an inner diameter of 15 nM. Alpha-beta heterodimers associate head-to-tail to form protofilaments running lengthwise along the microtubule wall with the beta-tubulin subunit facing the microtubule plus end conferring a structural polarity. Microtubules usually have 13 protofilaments but different protofilament numbers can be found in some organisms and specialized cells. Interacts with NUM1. Mg(2+) is required as a cofactor.

It localises to the cytoplasm. The protein resides in the cytoskeleton. It carries out the reaction GTP + H2O = GDP + phosphate + H(+). Tubulin is the major constituent of microtubules, a cylinder consisting of laterally associated linear protofilaments composed of alpha- and beta-tubulin heterodimers. Microtubules grow by the addition of GTP-tubulin dimers to the microtubule end, where a stabilizing cap forms. Below the cap, tubulin dimers are in GDP-bound state, owing to GTPase activity of alpha-tubulin. The protein is Tubulin alpha-3 chain (TUB3) of Saccharomyces cerevisiae (strain ATCC 204508 / S288c) (Baker's yeast).